The sequence spans 142 residues: Large ribosomal subunit protein uL11 (142 aa).

This sequence belongs to the universal ribosomal protein uL11 family. Part of the ribosomal stalk of the 50S ribosomal subunit. Interacts with L10 and the large rRNA to form the base of the stalk. L10 forms an elongated spine to which L12 dimers bind in a sequential fashion forming a multimeric L10(L12)X complex. In terms of processing, one or more lysine residues are methylated.

In terms of biological role, forms part of the ribosomal stalk which helps the ribosome interact with GTP-bound translation factors. This chain is Large ribosomal subunit protein uL11, found in Desulfitobacterium hafniense (strain DSM 10664 / DCB-2).